Here is a 279-residue protein sequence, read N- to C-terminus: Large ribosomal subunit protein uL5c (279 aa).

Disordered stretches follow at residues 1 to 23 and 40 to 63; these read MAATAVTLPSSPAPFPVTTTASS and LRVAASAAADAPPKPAPPPTSPSG. The N-terminal 43 residues, 1-43, are a transit peptide targeting the chloroplast; the sequence is MAATAVTLPSSPAPFPVTTTASSSRNVRLLLRSPPPRRALRVA. Over residues 41-50 the composition is skewed to low complexity; that stretch reads RVAASAAADA. Over residues 51-60 the composition is skewed to pro residues; sequence PPKPAPPPTS.

It belongs to the universal ribosomal protein uL5 family. In terms of assembly, part of the 50S ribosomal subunit; contacts the 5S rRNA.

The protein localises to the plastid. The protein resides in the chloroplast. In terms of biological role, binds 5S rRNA, forms part of the central protuberance of the 50S subunit. This Oryza sativa subsp. japonica (Rice) protein is Large ribosomal subunit protein uL5c (RPL5).